Here is a 336-residue protein sequence, read N- to C-terminus: Fructose-1,6-bisphosphatase class 1 (336 aa).

The Mg(2+) site is built by Glu-90, Asp-112, Leu-114, and Asp-115. Substrate contacts are provided by residues 115-118 (DGSS), Asn-207, and Lys-273. Residue Glu-279 coordinates Mg(2+).

The protein belongs to the FBPase class 1 family. In terms of assembly, homotetramer. Requires Mg(2+) as cofactor.

The protein localises to the cytoplasm. It carries out the reaction beta-D-fructose 1,6-bisphosphate + H2O = beta-D-fructose 6-phosphate + phosphate. The protein operates within carbohydrate biosynthesis; gluconeogenesis. In Xanthomonas axonopodis pv. citri (strain 306), this protein is Fructose-1,6-bisphosphatase class 1.